The following is a 71-amino-acid chain: uncharacterized protein (71 aa).

Residues 12–32 form a helical membrane-spanning segment; that stretch reads FLVSIAFFGLAPTIPLLAIAL.

It is found in the membrane. This is an uncharacterized protein from Sinorhizobium fredii (strain NBRC 101917 / NGR234).